Here is a 145-residue protein sequence, read N- to C-terminus: Large ribosomal subunit protein uL16 (145 aa).

It belongs to the universal ribosomal protein uL16 family. Part of the 50S ribosomal subunit.

In terms of biological role, binds 23S rRNA and is also seen to make contacts with the A and possibly P site tRNAs. In Agathobacter rectalis (strain ATCC 33656 / DSM 3377 / JCM 17463 / KCTC 5835 / VPI 0990) (Eubacterium rectale), this protein is Large ribosomal subunit protein uL16.